Consider the following 210-residue polypeptide: Putative transmembrane protein DDB_G0267530 (210 aa).

The disordered stretch occupies residues 1–40; it reads MGVEDQPQTQPQTQPQQQPQMGYQPQMGYQPQAQMGYQPQ. Helical transmembrane passes span 119-139 and 148-168; these read VIVFIIGFFFSIVWLGGFFFI and TFGILSVVFFFLVLVIVVIVV.

It localises to the membrane. The sequence is that of Putative transmembrane protein DDB_G0267530 from Dictyostelium discoideum (Social amoeba).